Consider the following 887-residue polypeptide: PAN2-PAN3 deadenylation complex subunit Pan3 (887 aa).

The C3H1-type zinc finger occupies 49–77 (GVKLKYCRYYAKDKTCFYGEECQFLHEDP). 3 disordered regions span residues 111–139 (GGGAGPPAGPKKPELGVPGAATAGGGLDG), 280–307 (ENNLQTPNPTASEFIPKGGSTSRLSNVS), and 321–393 (PSMG…GQVI). The tract at residues 147 to 498 (MDGGALTDAS…PPPNRIQKSS (352 aa)) is necessary and sufficient for interaction with PABPC1 but not needed for interaction with PAN2. 2 stretches are compositionally biased toward polar residues: residues 281 to 290 (NNLQTPNPTA) and 298 to 307 (GSTSRLSNVS). The PABPC-interacting motif-2 (PAM-2) signature appears at 284 to 299 (QTPNPTASEFIPKGGS). Phosphoserine is present on residues Ser354 and Ser361. The pseudokinase domain stretch occupies residues 463–750 (QIDQADMPAV…SVNDIMPMIG (288 aa)). Residues Arg521, 570–577 (DFHAGGET), and 644–645 (TK) each bind ATP. The tract at residues 789–887 (TINERPEFQK…ELIAAANGQL (99 aa)) is knob domain.

This sequence belongs to the protein kinase superfamily. PAN3 family. Homodimer. Forms a heterotrimer with a catalytic subunit PAN2 to form the poly(A)-nuclease (PAN) deadenylation complex. Interacts (via PAM-2 motif) with poly(A)-binding protein PABPC1 (via PABC domain), conferring substrate specificity of the enzyme complex. Interacts with the GW182 family proteins TNRC6A, TNRC6B and TNRC6C. Interacts with YTHDF3. As to quaternary structure, interacts with PAN2. Interacts (via N-terminus) with PABPC1 at lower efficiency than isoform 3. In terms of assembly, interacts with PAN2. Interacts (via N-terminus) with PABPC1 at higher efficiency than isoform 1.

It is found in the cytoplasm. It localises to the P-body. Its subcellular location is the nucleus. Regulatory subunit of the poly(A)-nuclease (PAN) deadenylation complex, one of two cytoplasmic mRNA deadenylases involved in general and miRNA-mediated mRNA turnover. PAN specifically shortens poly(A) tails of RNA and the activity is stimulated by poly(A)-binding protein (PABP). PAN deadenylation is followed by rapid degradation of the shortened mRNA tails by the CCR4-NOT complex. Deadenylated mRNAs are then degraded by two alternative mechanisms, namely exosome-mediated 3'-5' exonucleolytic degradation, or deadenylation-dependent mRNA decapping and subsequent 5'-3' exonucleolytic degradation by XRN1. PAN3 acts as a regulator for PAN activity, recruiting the catalytic subunit PAN2 to mRNA via its interaction with RNA and PABP, and to miRNA targets via its interaction with GW182 family proteins. Functionally, decreases PAN2-mediated deadenylation, possibly by preventing progression into the second CCR4-NOT mediated stage of biphasic deadenylation. Has a significant effect on mRNA stability, generally stabilizing a subset of the transcriptome. Stabilizes mRNAs degraded by the AU-rich element (ARE)-mediated mRNA decay pathway but promotes degradation of mRNAs by the microRNA-mediated pathway. Its activity influences mRNP remodeling, specifically reducing formation of a subset of P-bodies containing GW220, an isoform of TNRC6A. In terms of biological role, enhances PAN2 deadenylase activity and has an extensive effect on mRNA stability, generally enhancing mRNA decay across the transcriptome by multiple pathways, including the AU-rich element (ARE)-mediated pathway, microRNA-mediated pathway and the nonsense-mediated pathway (NMD). Its activity is required for efficient P-body formation. May be involved in regulating mRNAs of genes involved in cell cycle progression and cell proliferation. This chain is PAN2-PAN3 deadenylation complex subunit Pan3, found in Mus musculus (Mouse).